A 586-amino-acid chain; its full sequence is Arginine--tRNA ligase (586 aa).

Residues 131 to 141 (ANPTGPMHVGH) carry the 'HIGH' region motif.

It belongs to the class-I aminoacyl-tRNA synthetase family. In terms of assembly, monomer.

It is found in the cytoplasm. The enzyme catalyses tRNA(Arg) + L-arginine + ATP = L-arginyl-tRNA(Arg) + AMP + diphosphate. This chain is Arginine--tRNA ligase, found in Azorhizobium caulinodans (strain ATCC 43989 / DSM 5975 / JCM 20966 / LMG 6465 / NBRC 14845 / NCIMB 13405 / ORS 571).